We begin with the raw amino-acid sequence, 396 residues long: MSVRLVLAKGREKSLLRRHPWVFSGAVARMEGKASLGETIDIVDHQGKWLARGAYSPASQIRARVWTFDPSESIDIAFFTRRLQQAQKWRDWLAQKDGLDSYRLIAGESDGLPGITIDRFGNFLVLQLLSAGAEYQRAALISVLQTLYPECAIYDRSDVAVRKKEGMELTQGPITGELPPALLPIEEHGMKLLVDIQHGHKTGYYLDQRDSRLATRRYVENKRVLNCFSYTGGFAVSALMGGCSQVVSVDTSHEALDIARQNVELNKLDLSKAEFVRDDVFKLLRTYRDRGEKFDVIVMDPPKFVENKSQLMGACRGYKDINMLAIQLLNEGGILLTFSCSGLMTSDLFQKIIADAAIDAGRDVQFIEQFRQAADHPVIATYPEGLYLKGFACRVM.

The PUA domain maps to Ser2–Arg81.

This sequence belongs to the methyltransferase superfamily. RlmI family.

It is found in the cytoplasm. The catalysed reaction is cytidine(1962) in 23S rRNA + S-adenosyl-L-methionine = 5-methylcytidine(1962) in 23S rRNA + S-adenosyl-L-homocysteine + H(+). Functionally, specifically methylates the cytosine at position 1962 (m5C1962) of 23S rRNA. This is Ribosomal RNA large subunit methyltransferase I from Escherichia coli O127:H6 (strain E2348/69 / EPEC).